The following is a 434-amino-acid chain: Glutamyl-tRNA reductase (434 aa).

Substrate is bound by residues 49 to 52, S109, 114 to 116, and Q120; these read TCNR and EPQ. C50 (nucleophile) is an active-site residue. 189 to 194 lines the NADP(+) pocket; it reads GAGEMC.

Belongs to the glutamyl-tRNA reductase family. Homodimer.

It catalyses the reaction (S)-4-amino-5-oxopentanoate + tRNA(Glu) + NADP(+) = L-glutamyl-tRNA(Glu) + NADPH + H(+). It participates in porphyrin-containing compound metabolism; protoporphyrin-IX biosynthesis; 5-aminolevulinate from L-glutamyl-tRNA(Glu): step 1/2. Catalyzes the NADPH-dependent reduction of glutamyl-tRNA(Glu) to glutamate 1-semialdehyde (GSA). The sequence is that of Glutamyl-tRNA reductase from Geobacter metallireducens (strain ATCC 53774 / DSM 7210 / GS-15).